The sequence spans 548 residues: Membrane protein insertase YidC (548 aa).

Residues 6–26 (NLLVIALLFVSFMIWQAWEQD) form a helical membrane-spanning segment. A disordered region spans residues 28–56 (NPQPQTQQTTQTTTTAAGSAADQGVPASG). Residues 29 to 42 (PQPQTQQTTQTTTT) show a composition bias toward low complexity. Helical transmembrane passes span 350–370 (FVGNWGFSIIIITFIVRGIMY), 424–444 (FPLIIQMPIFLALYYMLMGSI), 458–478 (LSAQDPYYILPILMGVTMFFI), and 499–519 (PVIFTVFFLWFPSGLVLYYIV).

Belongs to the OXA1/ALB3/YidC family. Type 1 subfamily. Interacts with the Sec translocase complex via SecD. Specifically interacts with transmembrane segments of nascent integral membrane proteins during membrane integration.

Its subcellular location is the cell inner membrane. Functionally, required for the insertion and/or proper folding and/or complex formation of integral membrane proteins into the membrane. Involved in integration of membrane proteins that insert both dependently and independently of the Sec translocase complex, as well as at least some lipoproteins. Aids folding of multispanning membrane proteins. The sequence is that of Membrane protein insertase YidC from Salmonella enteritidis PT4 (strain P125109).